Reading from the N-terminus, the 244-residue chain is MSSIDKKELEKFEKISHNWWNKDGEFGILHRINPIRLEYIIEKITSHYNDISKLEILDVGCGGGLIATPLAAQGFNVTAIDALQSNIETASTYAKENGVKVNYLQSTIEELQSDKLYDVVICLEVIEHVENVQQFILNLVGHIKPNGMAIISTINRTKKAYVLGIIVAEYVLGWVPKNTHDYSKFLKPSEIYEMLTDTDIEIKELKGLVYDPAKNEWKLSNDIDVNYFMCLGRKTNRHCKEITK.

Residues arginine 36, glycine 60, aspartate 81, and leucine 123 each coordinate S-adenosyl-L-methionine.

It belongs to the methyltransferase superfamily. UbiG/COQ3 family.

The catalysed reaction is a 3-demethylubiquinol + S-adenosyl-L-methionine = a ubiquinol + S-adenosyl-L-homocysteine + H(+). It carries out the reaction a 3-(all-trans-polyprenyl)benzene-1,2-diol + S-adenosyl-L-methionine = a 2-methoxy-6-(all-trans-polyprenyl)phenol + S-adenosyl-L-homocysteine + H(+). It participates in cofactor biosynthesis; ubiquinone biosynthesis. Its function is as follows. O-methyltransferase that catalyzes the 2 O-methylation steps in the ubiquinone biosynthetic pathway. In Rickettsia felis (strain ATCC VR-1525 / URRWXCal2) (Rickettsia azadi), this protein is Ubiquinone biosynthesis O-methyltransferase.